A 312-amino-acid chain; its full sequence is Olfactory receptor 14C36 (312 aa).

At 1-23 the chain is on the extracellular side; it reads MPNSTTVMEFLLMRFSDVWTLQI. Asparagine 3 is a glycosylation site (N-linked (GlcNAc...) asparagine). The helical transmembrane segment at 24–44 threads the bilayer; the sequence is LHSASFFMLYLVTLMGNILIV. Over 45–52 the chain is Cytoplasmic; it reads TVTTCDSS. A helical membrane pass occupies residues 53–73; it reads LHMPMYFFLRNLSILDACYIS. Topologically, residues 74 to 97 are extracellular; that stretch reads VTVPTSCVNSLLDSTTISKAGCVA. A disulfide bond links cysteine 95 and cysteine 187. Residues 98 to 118 traverse the membrane as a helical segment; that stretch reads QVFLVVFFVYVELLFLTIMAH. Residues 119–137 are Cytoplasmic-facing; sequence DRYVAVCQPLHYPVIVNSR. A helical membrane pass occupies residues 138 to 158; sequence ICIQMTLASLLSGLVYAGMHT. The Extracellular portion of the chain corresponds to 159–194; sequence GSTFQLPFCRSNVIHQFFCDIPSLLKLSCSDTFSNE. The chain crosses the membrane as a helical span at residues 195-215; that stretch reads VMIVVSALGVGGGCFIFIIRS. The Cytoplasmic portion of the chain corresponds to 216–235; that stretch reads YIHIFSTVLGFPRGADRTKA. A helical membrane pass occupies residues 236–256; sequence FSTCIPHILVVSVFLSSCSSV. At 257 to 269 the chain is on the extracellular side; the sequence is YLRPPAIPAATQD. Residues 270-290 traverse the membrane as a helical segment; that stretch reads LILSGFYSIMPPLFNPIIYSL. Residues 291 to 312 are Cytoplasmic-facing; that stretch reads RNKQIKVAIKKIMKRIFYSENV.

It belongs to the G-protein coupled receptor 1 family.

It is found in the cell membrane. Odorant receptor. The sequence is that of Olfactory receptor 14C36 (OR14C36) from Homo sapiens (Human).